Here is a 66-residue protein sequence, read N- to C-terminus: UPF0434 protein M446_0487 (66 aa).

The protein belongs to the UPF0434 family.

The sequence is that of UPF0434 protein M446_0487 from Methylobacterium sp. (strain 4-46).